An 87-amino-acid chain; its full sequence is MSEKHFILPSSMLMIVSAVFGGIGIITTIVFVILTVLHSKSAVCKPAGKEDMKKLNGIEGMQTIKEECGGSTETSSSKPKKKAKKEV.

The chain crosses the membrane as a helical span at residues 13-33 (LMIVSAVFGGIGIITTIVFVI). The disordered stretch occupies residues 66-87 (EECGGSTETSSSKPKKKAKKEV). The segment covering 78–87 (KPKKKAKKEV) has biased composition (basic residues).

It is found in the membrane. This is an uncharacterized protein from Caenorhabditis elegans.